The chain runs to 436 residues: Glutamyl-tRNA reductase (436 aa).

Substrate is bound by residues 49 to 52 (TCNR), Ser-109, 114 to 116 (EGQ), and Gln-120. Cys-50 serves as the catalytic Nucleophile. 198–203 (GAGRMS) is an NADP(+) binding site.

Belongs to the glutamyl-tRNA reductase family. In terms of assembly, homodimer.

It carries out the reaction (S)-4-amino-5-oxopentanoate + tRNA(Glu) + NADP(+) = L-glutamyl-tRNA(Glu) + NADPH + H(+). Its pathway is porphyrin-containing compound metabolism; protoporphyrin-IX biosynthesis; 5-aminolevulinate from L-glutamyl-tRNA(Glu): step 1/2. It participates in porphyrin-containing compound metabolism; chlorophyll biosynthesis. In terms of biological role, catalyzes the NADPH-dependent reduction of glutamyl-tRNA(Glu) to glutamate 1-semialdehyde (GSA). In Prochlorococcus marinus (strain MIT 9303), this protein is Glutamyl-tRNA reductase.